The primary structure comprises 473 residues: FAD-dependent monooxygeanse terM (473 aa).

An N-terminal signal peptide occupies residues 1 to 22 (MSENFKVLIIGGSVAGLTLALC). Positions 34, 48, 107, 303, and 316 each coordinate FAD. A helical membrane pass occupies residues 441-461 (VLYLICGALLAWWASGLVWHF).

This sequence belongs to the paxM FAD-dependent monooxygenase family. Requires FAD as cofactor.

It is found in the membrane. Its pathway is secondary metabolite biosynthesis. Its function is as follows. FAD-dependent monooxygeanse; part of the gene cluster that mediates the biosynthesis of terpendoles, indole-diterpene (IDT) mycotoxins including terpendole I, terpendole K, terpendole C, as well as the kinesin Eg5 inhibitor terpendole E. Terpendoles biosynthesis begins with the synthesis of geranylgeranyl diphosphate (GGPP) by a yet unidentified GGPP synthase. Condensation of indole-3-glycerol phosphate with GGPP by the prenyltransferase terC then forms 3-geranylgeranylindole (3-GGI), followed by epoxidation and cyclization of this intermediate (by the FAD-dependent monooxygeanse terM and the terpene cyclase terB) to form paspaline. The cytochrome monooxygenase terQ then hydroxylates paspalline at C-11 to yield terpendole E. The cytochrome monooxygenase terP converts terpendole E to 13-desoxyterpendole I, and terQ converts 13-desoxyterpendole I into terpendole I. TerF and terK are required for conversion of terpendole I to terpendole C which is further converted to terpendole K. This is FAD-dependent monooxygeanse terM from Tolypocladium album (Soil fungus).